A 795-amino-acid chain; its full sequence is Glutamine--tRNA ligase, cytoplasmic (795 aa).

The tract at residues 188–220 (ADNEKPTKKKEKKEKPAKVEEKKAVVETTAEPS) is disordered. Over residues 200 to 212 (KEKPAKVEEKKAV) the composition is skewed to basic and acidic residues. The short motif at 277 to 287 (PEPNGYLHIGH) is the 'HIGH' region element. ATP contacts are provided by residues 278 to 280 (EPN) and 284 to 290 (HIGHAKA). The L-glutamine site is built by Asp-310 and Tyr-450. ATP is bound by residues Thr-469, 498-499 (RL), and 506-508 (MSK). A 'KMSKS' region motif is present at residues 505–509 (VMSKR).

The protein belongs to the class-I aminoacyl-tRNA synthetase family.

Its subcellular location is the cytoplasm. The protein localises to the cytosol. The enzyme catalyses tRNA(Gln) + L-glutamine + ATP = L-glutaminyl-tRNA(Gln) + AMP + diphosphate. In Arabidopsis thaliana (Mouse-ear cress), this protein is Glutamine--tRNA ligase, cytoplasmic.